The following is a 420-amino-acid chain: Pre-mRNA-splicing factor RBM22 (420 aa).

An N-acetylalanine modification is found at Ala-2. Phosphoserine occurs at positions 4 and 102. Glycyl lysine isopeptide (Lys-Gly) (interchain with G-Cter in SUMO2) cross-links involve residues Lys-139 and Lys-149. The C3H1-type zinc finger occupies 159–186 (RNRPHICSFWVKGECKRGEECPYRHEKP). The residue at position 212 (Lys-212) is an N6-acetyllysine. An RRM domain is found at 232-305 (TTLYVGGLGD…RRLNVKWGRS (74 aa)). Lys-290 is covalently cross-linked (Glycyl lysine isopeptide (Lys-Gly) (interchain with G-Cter in SUMO2)). Disordered regions lie at residues 303–343 (GRSQ…AAEE) and 372–420 (APPP…HSSP). Positions 309-318 (RGKEKEKDGT) are enriched in basic and acidic residues.

The protein belongs to the SLT11 family. Component of the pre-catalytic and catalytic spliceosome complexes. Component of the postcatalytic spliceosome P complex. Interacts with PDCD6; the interaction induces translocation of PDCD6 in the cytoplasm. Interacts with PPIL1.

The protein localises to the nucleus. Its subcellular location is the cytoplasm. Required for pre-mRNA splicing as component of the activated spliceosome. Involved in the first step of pre-mRNA splicing. Binds directly to the internal stem-loop (ISL) domain of the U6 snRNA and to the pre-mRNA intron near the 5' splice site during the activation and catalytic phases of the spliceosome cycle. Involved in both translocations of the nuclear SLU7 to the cytoplasm and the cytosolic calcium-binding protein PDCD6 to the nucleus upon cellular stress responses. This is Pre-mRNA-splicing factor RBM22 (RBM22) from Homo sapiens (Human).